Reading from the N-terminus, the 435-residue chain is GTPase Der (435 aa).

EngA-type G domains are found at residues 4–167 (PTLA…PSED) and 175–350 (IKFS…ENQT). GTP-binding positions include 10 to 17 (GRPNVGKS), 57 to 61 (DTGGI), 119 to 122 (NKVD), 181 to 188 (GRPNVGKS), 228 to 232 (DTAGI), and 293 to 296 (NKWD). In terms of domain architecture, KH-like spans 351 to 435 (RRIQSSVLND…PIHIIARKRK (85 aa)).

It belongs to the TRAFAC class TrmE-Era-EngA-EngB-Septin-like GTPase superfamily. EngA (Der) GTPase family. As to quaternary structure, associates with the 50S ribosomal subunit.

GTPase that plays an essential role in the late steps of ribosome biogenesis. The sequence is that of GTPase Der from Lacticaseibacillus paracasei (strain ATCC 334 / BCRC 17002 / CCUG 31169 / CIP 107868 / KCTC 3260 / NRRL B-441) (Lactobacillus paracasei).